A 113-amino-acid chain; its full sequence is U11-theraphotoxin-Hhn1a (113 aa).

The signal sequence occupies residues 1–21 (MNTVRVTFLLVFVLAVSLGQA). The propeptide occupies 22-74 (DKDENRMEMQEKTEQGKGYLDFAENLLPQKLEELEAKLLEEDSEESRNSRQKR). A compositionally biased stretch (basic and acidic residues) spans 59–69 (LLEEDSEESRN). The disordered stretch occupies residues 59–83 (LLEEDSEESRNSRQKRCIGEGVPCD). Disulfide bonds link Cys75–Cys90, Cys82–Cys95, and Cys89–Cys110.

Belongs to the neurotoxin 14 (magi-1) family. 01 (HNTX-16) subfamily. Expressed by the venom gland.

Its subcellular location is the secreted. Its function is as follows. Probable ion channel inhibitor. The protein is U11-theraphotoxin-Hhn1a of Cyriopagopus hainanus (Chinese bird spider).